A 283-amino-acid chain; its full sequence is Polyamine aminopropyltransferase (283 aa).

Residues 5–241 (NNWYIEHFER…GWWSVTLARK (237 aa)) enclose the PABS domain. An S-methyl-5'-thioadenosine-binding site is contributed by Q35. Spermidine contacts are provided by H66 and D90. Residues D110 and 141-142 (DG) contribute to the S-methyl-5'-thioadenosine site. The active-site Proton acceptor is D160. A spermidine-binding site is contributed by 160–163 (DSTD). S-methyl-5'-thioadenosine is bound at residue P167.

It belongs to the spermidine/spermine synthase family. Homodimer or homotetramer.

The protein localises to the cytoplasm. It catalyses the reaction S-adenosyl 3-(methylsulfanyl)propylamine + putrescine = S-methyl-5'-thioadenosine + spermidine + H(+). It participates in amine and polyamine biosynthesis; spermidine biosynthesis; spermidine from putrescine: step 1/1. In terms of biological role, catalyzes the irreversible transfer of a propylamine group from the amino donor S-adenosylmethioninamine (decarboxy-AdoMet) to putrescine (1,4-diaminobutane) to yield spermidine. This chain is Polyamine aminopropyltransferase, found in Stenotrophomonas maltophilia (strain R551-3).